A 279-amino-acid polypeptide reads, in one-letter code: Urease accessory protein UreD (279 aa).

Belongs to the UreD family. UreD, UreF and UreG form a complex that acts as a GTP-hydrolysis-dependent molecular chaperone, activating the urease apoprotein by helping to assemble the nickel containing metallocenter of UreC. The UreE protein probably delivers the nickel.

It is found in the cytoplasm. Its function is as follows. Required for maturation of urease via the functional incorporation of the urease nickel metallocenter. The polypeptide is Urease accessory protein UreD (Rhodopseudomonas palustris (strain ATCC BAA-98 / CGA009)).